The primary structure comprises 431 residues: Serine hydroxymethyltransferase (431 aa).

122 to 124 (GHI) is a binding site for (6S)-5,6,7,8-tetrahydrofolate. The residue at position 228 (Lys228) is an N6-(pyridoxal phosphate)lysine. A (6S)-5,6,7,8-tetrahydrofolate-binding site is contributed by Glu245.

The protein belongs to the SHMT family. In terms of assembly, homodimer. Pyridoxal 5'-phosphate serves as cofactor.

The protein resides in the cytoplasm. Its pathway is amino-acid biosynthesis; glycine biosynthesis; glycine from L-serine: step 1/1. In terms of biological role, catalyzes the reversible interconversion of serine and glycine with a modified folate serving as the one-carbon carrier. Also exhibits a pteridine-independent aldolase activity toward beta-hydroxyamino acids, producing glycine and aldehydes, via a retro-aldol mechanism. This Thermococcus kodakarensis (strain ATCC BAA-918 / JCM 12380 / KOD1) (Pyrococcus kodakaraensis (strain KOD1)) protein is Serine hydroxymethyltransferase.